The chain runs to 254 residues: Floral homeotic protein APETALA 1 (254 aa).

Residues 3-57 form the MADS-box domain; the sequence is RGRVQLKRIENKINRQVTFSKRRAGLLKKAHEISVLCDAEVALVVFSHKGKLFEY. The K-box domain occupies 88–178; that stretch reads NTNWSMEYNR…SKQIKEREKI (91 aa).

The protein resides in the nucleus. In terms of biological role, controls floral meristem identity. Is also required for normal development of sepals and petals. Is required for the transition of an influorescence meristem into a floral meristem. Interacts with LEAFY. The polypeptide is Floral homeotic protein APETALA 1 (AP1) (Sinapis alba (White mustard)).